Consider the following 222-residue polypeptide: Coiled-coil domain-containing protein 70 (222 aa).

A coiled-coil region spans residues 129 to 153 (NALWERDRNLLQEDKALWEEEKALW).

This Homo sapiens (Human) protein is Coiled-coil domain-containing protein 70.